The sequence spans 335 residues: Protease HtpX homolog (335 aa).

3 helical membrane-spanning segments follow: residues 9 to 29 (VYMM…STIA), 42 to 62 (LFTS…AIIY), and 64 to 84 (ILAY…LLII). His-168 contributes to the Zn(2+) binding site. Residue Glu-169 is part of the active site. His-172 provides a ligand contact to Zn(2+). The next 2 membrane-spanning stretches (helical) occupy residues 179–199 (AVML…YALL) and 213–233 (AAIG…VLAF). Glu-238 serves as a coordination point for Zn(2+).

Belongs to the peptidase M48B family. Zn(2+) is required as a cofactor.

It localises to the cell membrane. This chain is Protease HtpX homolog, found in Archaeoglobus fulgidus (strain ATCC 49558 / DSM 4304 / JCM 9628 / NBRC 100126 / VC-16).